The chain runs to 857 residues: Blue light receptor lreA (857 aa).

PAS domains are found at residues 306–328 (IIYVSEAFERLTGYTEQEIVGQN), 479–542 (LVEN…TTTD), and 608–642 (LSKSGIVLFMTSKARPVLGRMPDELIGKSLQDLMD). Residues 811 to 836 (CAICQTKKTPEWRRGPSGERDLCNSC) form a GATA-type zinc finger.

Transcription factor that acts as a blue light sensor. Plays crucial roles in fungal growth and asexual development. Involved in conidiophore formation, sclerotium production, and conidial stress tolerance. Promotes conidiation by inducing the expression of brlA and abaA. Positively regulates the fungal pathogenicity towards maize. In blue light conditions, inhibits aflatoxin B1 (AFB1) biosynthesis by down-regulating the expression of key genes such as aflA, aflJ, aflH, aflO and aflK. In Aspergillus flavus, this protein is Blue light receptor lreA.